We begin with the raw amino-acid sequence, 217 residues long: Vacuolar protein-sorting-associated protein 37 homolog 1 (217 aa).

The interval 1-49 (MFNFWGSKDQQQGQSRPQEASSQSPWYSPSLVSSPSSSRPQSSGQISAQ) is disordered. Over residues 8-20 (KDQQQGQSRPQEA) the composition is skewed to polar residues. Over residues 21–47 (SSQSPWYSPSLVSSPSSSRPQSSGQIS) the composition is skewed to low complexity. A VPS37 C-terminal domain is found at 137–217 (QEKLNELERQ…IHLAAKTSNI (81 aa)).

The protein belongs to the VPS37 family. In terms of assembly, component of the endosomal sorting required for transport complex I (ESCRT-I), composed of ELC, VPS28 and VPS37. Interacts with ELC.

The protein resides in the endosome. Functionally, component of the ESCRT-I complex (endosomal sorting complex required for transport I), a regulator of vesicular trafficking process. Required for the sorting of endocytic ubiquitinated cargos into multivesicular bodies (MVBs). The sequence is that of Vacuolar protein-sorting-associated protein 37 homolog 1 (VPS37-1) from Arabidopsis thaliana (Mouse-ear cress).